A 663-amino-acid polypeptide reads, in one-letter code: Transcriptional repressor CTCFL (663 aa).

The segment covering 24 to 51 (EKGLKEEEKDGVCREKDHRSPSELEAER) has biased composition (basic and acidic residues). 2 disordered regions span residues 24–55 (EKGLKEEEKDGVCREKDHRSPSELEAERTSGA) and 221–250 (NSNVEEQEDQPTAGQADAEKAKSTKNQRKT). 10 C2H2-type zinc fingers span residues 257-279 (FHCDVCMFTSSRMSSFNRHMKTH), 285-307 (HLCHLCLKTFRTVTLLRNHVNTH), 313-336 (YKCNDCNMAFVTSGELVRHRRYKH), 342-364 (FKCSMCKYASVEASKLKRHVRSH), 370-392 (FQCCQCSYASRDTYKLKRHMRTH), 398-421 (YECHICHTRFTQSGTMKIHILQKH), 428-451 (YQCPHCATIIARKSDLRVHMRNLH), 458-480 (LKCRYCSAVFHERYALIQHQKTH), 486-508 (FKCKHCSYACKQERHMTAHIRTH), and 514-537 (FTCLSCNKCFRQKQLLNAHFRKYH). The segment at 546–568 (YKCSKCGKGFSRWINLHRHSEKC) adopts a C2H2-type 11; atypical zinc-finger fold. The tract at residues 569-630 (GSGEAKSAAS…STTKGEQFPG (62 aa)) is disordered. The segment covering 580–590 (KGRRTRKRKQT) has biased composition (basic residues). Positions 594–607 (EATKGQKEAAKGWK) are enriched in basic and acidic residues. Residues 608–620 (EAANGDEAAAEEA) are compositionally biased toward low complexity.

This sequence belongs to the CTCF zinc-finger protein family. Interacts with histones, PRMT7 and SETD1A. Interacts (via N-terminus) with BAG6/BAT3. Testis specific. Specifically expressed in primary spermatocytes.

Its subcellular location is the cytoplasm. The protein resides in the nucleus. Testis-specific DNA binding protein responsible for insulator function, nuclear architecture and transcriptional control, which probably acts by recruiting epigenetic chromatin modifiers. Plays a key role in gene imprinting in male germline, by participating in the establishment of differential methylation at the IGF2/H19 imprinted control region (ICR). Directly binds the unmethylated H19 ICR and recruits the PRMT7 methyltransferase, leading to methylate histone H4 'Arg-3' to form H4R3sme2. This probably leads to recruit de novo DNA methyltransferases at these sites. Seems to act as tumor suppressor. In association with DNMT1 and DNMT3B, involved in activation of BAG1 gene expression by binding to its promoter. Required for dimethylation of H3 lysine 4 (H3K4me2) of MYC and BRCA1 promoters. The chain is Transcriptional repressor CTCFL (CTCFL) from Homo sapiens (Human).